We begin with the raw amino-acid sequence, 140 residues long: Sex-regulated protein janus-B (140 aa).

Arginine 42 provides a ligand contact to substrate. Histidine 69 functions as the Proton acceptor in the catalytic mechanism. Residue 110–112 (SRT) participates in substrate binding.

It belongs to the janus family. In terms of tissue distribution, germline cells of adult males.

In terms of biological role, janA and janB regulate somatic sex differentiation. In Drosophila melanogaster (Fruit fly), this protein is Sex-regulated protein janus-B (janB).